The sequence spans 108 residues: MMKGQLAGLMRQAQQMQENMKKAQDALAEIIVEGESGGGLVKVSMSCRHDVKRVAIDPSLLADDKDMLEDLVAAAFNDALRKVESTSQEKMASVTAGMPLPAGMKLPF.

The protein belongs to the YbaB/EbfC family. As to quaternary structure, homodimer.

It is found in the cytoplasm. Its subcellular location is the nucleoid. Its function is as follows. Binds to DNA and alters its conformation. May be involved in regulation of gene expression, nucleoid organization and DNA protection. In Bordetella petrii (strain ATCC BAA-461 / DSM 12804 / CCUG 43448), this protein is Nucleoid-associated protein Bpet3552.